The chain runs to 117 residues: Ribonuclease P protein component (117 aa).

It belongs to the RnpA family. As to quaternary structure, consists of a catalytic RNA component (M1 or rnpB) and a protein subunit.

It carries out the reaction Endonucleolytic cleavage of RNA, removing 5'-extranucleotides from tRNA precursor.. RNaseP catalyzes the removal of the 5'-leader sequence from pre-tRNA to produce the mature 5'-terminus. It can also cleave other RNA substrates such as 4.5S RNA. The protein component plays an auxiliary but essential role in vivo by binding to the 5'-leader sequence and broadening the substrate specificity of the ribozyme. The chain is Ribonuclease P protein component from Staphylococcus aureus (strain bovine RF122 / ET3-1).